Here is a 269-residue protein sequence, read N- to C-terminus: Putative hydro-lyase Atu3911 (269 aa).

This sequence belongs to the D-glutamate cyclase family.

In Agrobacterium fabrum (strain C58 / ATCC 33970) (Agrobacterium tumefaciens (strain C58)), this protein is Putative hydro-lyase Atu3911.